Reading from the N-terminus, the 253-residue chain is tRNA (guanine-N(7)-)-methyltransferase (253 aa).

The segment covering 1–12 (MSQTPMPQPDQA) has biased composition (pro residues). Positions 1–39 (MSQTPMPQPDQAPPVDVGQPVDEAEAKRRRFKTHGRKKG) are disordered. A compositionally biased stretch (basic residues) spans 27–39 (KRRRFKTHGRKKG). S-adenosyl-L-methionine-binding residues include Glu84, Asp109, Asn136, and Asp159. The active site involves Asp159. Residues Lys163, Asp195, and 232-235 (TNFE) each bind substrate.

It belongs to the class I-like SAM-binding methyltransferase superfamily. TrmB family.

It carries out the reaction guanosine(46) in tRNA + S-adenosyl-L-methionine = N(7)-methylguanosine(46) in tRNA + S-adenosyl-L-homocysteine. It participates in tRNA modification; N(7)-methylguanine-tRNA biosynthesis. Functionally, catalyzes the formation of N(7)-methylguanine at position 46 (m7G46) in tRNA. This chain is tRNA (guanine-N(7)-)-methyltransferase, found in Magnetococcus marinus (strain ATCC BAA-1437 / JCM 17883 / MC-1).